Consider the following 102-residue polypeptide: MHGTCLSGLYPVPFTHKAHDYPHFNIYISFSGPKYCITALNTCVIPLLHHILTTQCITLMLILQKIQHQNHLNIKIIIFQLYKINILTCGHYPLNSIPFTVT.

It belongs to the UPF0320 family.

In Saccharomyces cerevisiae (strain ATCC 204508 / S288c) (Baker's yeast), this protein is Putative UPF0320 protein YMR326C.